Consider the following 715-residue polypeptide: Solute carrier organic anion transporter family member 1C1 (715 aa).

Residues Met1–Lys43 lie on the Cytoplasmic side of the membrane. The helical transmembrane segment at Val44–Leu63 threads the bilayer. At Lys64–Gly82 the chain is on the extracellular side. A helical membrane pass occupies residues Ile83–Gly103. Topologically, residues Ala104 to Pro109 are cytoplasmic. Residues Lys110–Glu134 form a helical membrane-spanning segment. Over Lys135–Ser187 the chain is Extracellular. Residues Ser188 to Asp216 traverse the membrane as a helical segment. The Cytoplasmic segment spans residues Asp217–Ala235. A helical transmembrane segment spans residues Ile236–Ile256. Residues Gly257–Val274 lie on the Extracellular side of the membrane. A helical transmembrane segment spans residues Gly275 to Pro299. The Cytoplasmic portion of the chain corresponds to Lys300–Thr351. Residues Leu352–Phe373 form a helical membrane-spanning segment. Residues Gly374 to Lys393 are Extracellular-facing. The helical transmembrane segment at Ala394 to Met417 threads the bilayer. The Cytoplasmic segment spans residues Lys418–Arg421. A helical membrane pass occupies residues Leu422–Leu445. Residues Phe446–Phe557 lie on the Extracellular side of the membrane. The N-linked (GlcNAc...) asparagine glycan is linked to Asn452. Residues Arg473–Gly528 form the Kazal-like domain. 3 cysteine pairs are disulfide-bonded: Cys479-Cys509, Cys485-Cys505, and Cys494-Cys526. N-linked (GlcNAc...) asparagine glycosylation is found at Asn523 and Asn536. The chain crosses the membrane as a helical span at residues Leu558–Leu580. The Cytoplasmic segment spans residues Arg581–Ser589. Residues Phe590 to Ile615 form a helical membrane-spanning segment. Over Asp616–Thr649 the chain is Extracellular. Residues Thr650 to Leu667 form a helical membrane-spanning segment. The Cytoplasmic portion of the chain corresponds to Lys668–Leu715.

This sequence belongs to the organo anion transporter (TC 2.A.60) family. Widely expressed throughout the brain except in the cerebellum. Not detected in kidney, heart, lung, skeletal muscle, spleen, liver, nor testis. Highly expressed in cerebral microvessels throughout the brain and in the choroid plexus (at mRNA and protein level).

It localises to the cell membrane. The enzyme catalyses 3,3',5'-triiodo-L-thyronine(out) = 3,3',5'-triiodo-L-thyronine(in). It carries out the reaction L-thyroxine(out) = L-thyroxine(in). The catalysed reaction is L-thyroxine sulfate(out) = L-thyroxine sulfate(in). It catalyses the reaction 17beta-estradiol 17-O-(beta-D-glucuronate)(out) = 17beta-estradiol 17-O-(beta-D-glucuronate)(in). The enzyme catalyses 3,3',5-triiodo-L-thyronine(out) = 3,3',5-triiodo-L-thyronine(in). Functionally, mediates the Na(+)-independent high affinity transport of thyroid hormones at the plasma membrane of brain capillary endothelial cells. The transport activity of substrates L-thyroxine (T4) and 3,3',5'-triiodo-L-thyronine (reverse T3, rT3) is much greater than that of 3,3',5-triiodo-L-thyronine (T3). The prehormone, T4, is the major form in the circulating blood and is converted to the active form, T3, by the iodothyronine-deiodinase in peripheral organs. T3 plays an essential role in brain development via binding to specific nuclear receptors (thyroid hormone receptor). Also transports organic anions such as the conjugated steroid 17-beta-glucuronosyl estradiol (17beta-estradiol 17-O-(beta-D-glucuronate)). Transports T4 and estrone-3-sulfate in a pH-insensitive manner. May serve as a drug efflux system at the blood brain barrier. This chain is Solute carrier organic anion transporter family member 1C1 (Slco1c1), found in Mus musculus (Mouse).